Reading from the N-terminus, the 483-residue chain is Probable glycosyltransferase 4 (483 aa).

The Cytoplasmic portion of the chain corresponds to 1–26; it reads MSKLQDRHGGEAAADVGRRARHQRLL. Residues 27-47 traverse the membrane as a helical; Signal-anchor for type II membrane protein segment; it reads LSFPVFPIVLLLLAPCTIFFF. Over 48-483 the chain is Lumenal; the sequence is TSGDVPLPRI…KKTSRAARPM (436 aa). Residues 71–119 are disordered; it reads AVAADTSPPPPSPPSSSPPPLSFPPPPPPPSSPPPPALPVVDDHSDTQR. The segment covering 77-108 has biased composition (pro residues); the sequence is SPPPPSPPSSSPPPLSFPPPPPPPSSPPPPAL. An N-linked (GlcNAc...) asparagine glycan is attached at N448.

This sequence belongs to the glycosyltransferase 34 family.

The protein resides in the golgi apparatus membrane. Probable glycosyltransferase that may be involved in the biosynthesis of xyloglucan. The sequence is that of Probable glycosyltransferase 4 from Oryza sativa subsp. indica (Rice).